The primary structure comprises 442 residues: Glutamate--tRNA ligase 1 (442 aa).

Positions 9–19 (PSPTGKLHVGN) match the 'HIGH' region motif. The 'KMSKS' region signature appears at 240 to 244 (KLSKR). Residue Lys-243 participates in ATP binding.

Belongs to the class-I aminoacyl-tRNA synthetase family. Glutamate--tRNA ligase type 1 subfamily. Monomer.

The protein localises to the cytoplasm. The catalysed reaction is tRNA(Glu) + L-glutamate + ATP = L-glutamyl-tRNA(Glu) + AMP + diphosphate. Catalyzes the attachment of glutamate to tRNA(Glu) in a two-step reaction: glutamate is first activated by ATP to form Glu-AMP and then transferred to the acceptor end of tRNA(Glu). This chain is Glutamate--tRNA ligase 1, found in Novosphingobium aromaticivorans (strain ATCC 700278 / DSM 12444 / CCUG 56034 / CIP 105152 / NBRC 16084 / F199).